The primary structure comprises 692 residues: Proprotein convertase subtilisin/kexin type 9 (692 aa).

The first 30 residues, M1–A30, serve as a signal peptide directing secretion. Positions Q31–Q152 are excised as a propeptide. Y38 carries the sulfotyrosine modification. S47 is modified (phosphoserine). The 73-residue stretch at T77–V149 folds into the Inhibitor I9 domain. One can recognise a Peptidase S8 domain in the interval P155–L444. Catalysis depends on charge relay system residues D186 and H226. Disulfide bonds link C223–C255 and C323–C358. The active-site Charge relay system is S386. The segment at R450–Q692 is C-terminal domain. 3 disulfide bridges follow: C457–C527, C477–C526, and C486–C509. N533 is a glycosylation site (N-linked (GlcNAc...) asparagine). Intrachain disulfides connect C534–C601, C552–C600, C562–C588, C608–C679, C626–C678, and C635–C654. S688 carries the post-translational modification Phosphoserine.

This sequence belongs to the peptidase S8 family. In terms of assembly, monomer. Can self-associate to form dimers and higher multimers which may have increased LDLR degrading activity. The precursor protein but not the mature protein may form multimers. Interacts with APOB, VLDLR, LRP8/APOER2 and BACE1. The full-length immature form (pro-PCSK9) interacts with SCNN1A, SCNN1B and SCNN1G. The pro-PCSK9 form (via C-terminal domain) interacts with LDLR. Interacts (via the C-terminal domain) with ANXA2 (via repeat Annexin 1); the interaction inhibits the degradation of LDLR. Requires Ca(2+) as cofactor. Cleavage by furin and PCSK5 generates a truncated inactive protein that is unable to induce LDLR degradation. Post-translationally, undergoes autocatalytic cleavage in the endoplasmic reticulum to release the propeptide from the N-terminus and the cleavage of the propeptide is strictly required for its maturation and activation. The cleaved propeptide however remains associated with the catalytic domain through non-covalent interactions, preventing potential substrates from accessing its active site. As a result, it is secreted from cells as a propeptide-containing, enzymatically inactive protein. In terms of processing, phosphorylation protects the propeptide against proteolysis.

It is found in the cytoplasm. The protein resides in the secreted. It localises to the endosome. Its subcellular location is the lysosome. The protein localises to the cell surface. It is found in the endoplasmic reticulum. The protein resides in the golgi apparatus. Its proteolytic activity is autoinhibited by the non-covalent binding of the propeptide to the catalytic domain. Inhibited by EGTA. In terms of biological role, crucial player in the regulation of plasma cholesterol homeostasis. Binds to low-density lipid receptor family members: low density lipoprotein receptor (LDLR), very low density lipoprotein receptor (VLDLR), apolipoprotein E receptor (LRP1/APOER) and apolipoprotein receptor 2 (LRP8/APOER2), and promotes their degradation in intracellular acidic compartments. Acts via a non-proteolytic mechanism to enhance the degradation of the hepatic LDLR through a clathrin LDLRAP1/ARH-mediated pathway. May prevent the recycling of LDLR from endosomes to the cell surface or direct it to lysosomes for degradation. Can induce ubiquitination of LDLR leading to its subsequent degradation. Inhibits intracellular degradation of APOB via the autophagosome/lysosome pathway in a LDLR-independent manner. Involved in the disposal of non-acetylated intermediates of BACE1 in the early secretory pathway. Inhibits epithelial Na(+) channel (ENaC)-mediated Na(+) absorption by reducing ENaC surface expression primarily by increasing its proteasomal degradation. Regulates neuronal apoptosis via modulation of LRP8/APOER2 levels and related anti-apoptotic signaling pathways. The polypeptide is Proprotein convertase subtilisin/kexin type 9 (PCSK9) (Macaca nemestrina (Pig-tailed macaque)).